Consider the following 418-residue polypeptide: Gamma-glutamyl phosphate reductase (418 aa).

Belongs to the gamma-glutamyl phosphate reductase family.

The protein resides in the cytoplasm. It catalyses the reaction L-glutamate 5-semialdehyde + phosphate + NADP(+) = L-glutamyl 5-phosphate + NADPH + H(+). It participates in amino-acid biosynthesis; L-proline biosynthesis; L-glutamate 5-semialdehyde from L-glutamate: step 2/2. Functionally, catalyzes the NADPH-dependent reduction of L-glutamate 5-phosphate into L-glutamate 5-semialdehyde and phosphate. The product spontaneously undergoes cyclization to form 1-pyrroline-5-carboxylate. The protein is Gamma-glutamyl phosphate reductase of Photobacterium profundum (strain SS9).